Consider the following 62-residue polypeptide: Large ribosomal subunit protein bL28 (62 aa).

Positions 1–28 (MARVCAITGRKARSGNSRSHAMNATKRK) are disordered.

Belongs to the bacterial ribosomal protein bL28 family.

The sequence is that of Large ribosomal subunit protein bL28 from Bacillus thuringiensis (strain Al Hakam).